Here is a 254-residue protein sequence, read N- to C-terminus: Undecaprenyl-diphosphatase 3 (254 aa).

8 helical membrane-spanning segments follow: residues 8-28, 33-53, 74-94, 97-117, 133-153, 174-194, 207-227, and 233-253; these read TEFL…LIGF, AKVF…VIFW, LHII…HSAI, VLFG…LMIV, ITYK…WPGF, AEYT…LDLI, LFAT…VSFL, and VKLT…YFFI.

The protein belongs to the UppP family.

It localises to the cell membrane. It carries out the reaction di-trans,octa-cis-undecaprenyl diphosphate + H2O = di-trans,octa-cis-undecaprenyl phosphate + phosphate + H(+). Its function is as follows. Catalyzes the dephosphorylation of undecaprenyl diphosphate (UPP). Confers resistance to bacitracin. This Bacillus thuringiensis (strain Al Hakam) protein is Undecaprenyl-diphosphatase 3.